The primary structure comprises 209 residues: Imidazoleglycerol-phosphate dehydratase (209 aa).

This sequence belongs to the imidazoleglycerol-phosphate dehydratase family.

The protein resides in the cytoplasm. It carries out the reaction D-erythro-1-(imidazol-4-yl)glycerol 3-phosphate = 3-(imidazol-4-yl)-2-oxopropyl phosphate + H2O. The protein operates within amino-acid biosynthesis; L-histidine biosynthesis; L-histidine from 5-phospho-alpha-D-ribose 1-diphosphate: step 6/9. The sequence is that of Imidazoleglycerol-phosphate dehydratase from Nostoc sp. (strain PCC 7120 / SAG 25.82 / UTEX 2576).